A 141-amino-acid chain; its full sequence is MAKKVINVVKLQIPAGAATPAPPVGPALGQAGINIVGFTKDFNARTADQKGMIIPVVITVYEDRSFEFITKTPPAAVLLKKAAKVDKGSGEPNTKKVAKVTKDQVKEIAETKMKDLNAADIEAAMRMIEGTARSMGFTVED.

The protein belongs to the universal ribosomal protein uL11 family. In terms of assembly, part of the ribosomal stalk of the 50S ribosomal subunit. Interacts with L10 and the large rRNA to form the base of the stalk. L10 forms an elongated spine to which L12 dimers bind in a sequential fashion forming a multimeric L10(L12)X complex. Post-translationally, one or more lysine residues are methylated.

Its function is as follows. Forms part of the ribosomal stalk which helps the ribosome interact with GTP-bound translation factors. The chain is Large ribosomal subunit protein uL11 from Lactobacillus johnsonii (strain CNCM I-12250 / La1 / NCC 533).